The chain runs to 544 residues: Methionine--tRNA ligase (544 aa).

Positions 10–20 (PYANGSLHLGH) match the 'HIGH' region motif. 4 residues coordinate Zn(2+): cysteine 141, cysteine 144, cysteine 153, and cysteine 156. The short motif at 329 to 333 (KLSTS) is the 'KMSKS' region element. Residue threonine 332 coordinates ATP.

Belongs to the class-I aminoacyl-tRNA synthetase family. MetG type 1 subfamily. Monomer. Requires Zn(2+) as cofactor.

It is found in the cytoplasm. The catalysed reaction is tRNA(Met) + L-methionine + ATP = L-methionyl-tRNA(Met) + AMP + diphosphate. Is required not only for elongation of protein synthesis but also for the initiation of all mRNA translation through initiator tRNA(fMet) aminoacylation. This chain is Methionine--tRNA ligase, found in Bacillus mycoides (strain KBAB4) (Bacillus weihenstephanensis).